The following is a 165-amino-acid chain: Large ribosomal subunit protein uL11 (165 aa).

Ser38 is subject to Phosphoserine. A Glycyl lysine isopeptide (Lys-Gly) (interchain with G-Cter in SUMO2) cross-link involves residue Lys40. Lys48 participates in a covalent cross-link: Glycyl lysine isopeptide (Lys-Gly) (interchain with G-Cter in ubiquitin). An N6-acetyllysine modification is found at Lys54. Lys83 participates in a covalent cross-link: Glycyl lysine isopeptide (Lys-Gly) (interchain with G-Cter in ubiquitin). Ser165 is subject to Phosphoserine.

This sequence belongs to the universal ribosomal protein uL11 family. Component of the large ribosomal subunit. Mature ribosomes consist of a small (40S) and a large (60S) subunit. The 40S subunit contains about 33 different proteins and 1 molecule of RNA (18S). The 60S subunit contains about 49 different proteins and 3 molecules of RNA (28S, 5.8S and 5S). In terms of processing, ubiquitinated at Lys-48 and Lys-83 by RNF14 and RNF25 in response to ribosome collisions (ribosome stalling).

It is found in the cytoplasm. Its function is as follows. Component of the large ribosomal subunit. The ribosome is a large ribonucleoprotein complex responsible for the synthesis of proteins in the cell. Binds directly to 26S ribosomal RNA. The protein is Large ribosomal subunit protein uL11 (Rpl12) of Rattus norvegicus (Rat).